Here is a 104-residue protein sequence, read N- to C-terminus: MGSCLRFFKQGAILHENNTNFTERSSSVFFECNPCYSIEKLKSNRILIAVRLFSFAFSSFSTTLRILRDFIIAASKCEFEKIWSTTFSISFLSFNFKSSESPSL.

This is an uncharacterized protein from Schizosaccharomyces pombe (strain 972 / ATCC 24843) (Fission yeast).